The chain runs to 1233 residues: ATP-dependent helicase/nuclease subunit A (1233 aa).

One can recognise a UvrD-like helicase ATP-binding domain in the interval 3–474; the sequence is TKWTEEQKQA…ILLYKNFRSR (472 aa). 24 to 31 lines the ATP pocket; that stretch reads AAAGSGKT. In terms of domain architecture, UvrD-like helicase C-terminal spans 518 to 809; sequence VTGGAVELHL…RIMSIHKSKG (292 aa). A disordered region spans residues 533–555; it reads VEEEVEEKEEEKNEEKDFEEEEE.

It belongs to the helicase family. AddA subfamily. Heterodimer of AddA and AddB/RexB. Mg(2+) serves as cofactor.

It carries out the reaction Couples ATP hydrolysis with the unwinding of duplex DNA by translocating in the 3'-5' direction.. The catalysed reaction is ATP + H2O = ADP + phosphate + H(+). In terms of biological role, the heterodimer acts as both an ATP-dependent DNA helicase and an ATP-dependent, dual-direction single-stranded exonuclease. Recognizes the chi site generating a DNA molecule suitable for the initiation of homologous recombination. The AddA nuclease domain is required for chi fragment generation; this subunit has the helicase and 3' -&gt; 5' nuclease activities. In Thermoanaerobacter pseudethanolicus (strain ATCC 33223 / 39E) (Clostridium thermohydrosulfuricum), this protein is ATP-dependent helicase/nuclease subunit A.